The following is a 409-amino-acid chain: Tryptophan synthase beta chain (409 aa).

Residue K95 is modified to N6-(pyridoxal phosphate)lysine.

It belongs to the TrpB family. As to quaternary structure, tetramer of two alpha and two beta chains. The cofactor is pyridoxal 5'-phosphate.

It carries out the reaction (1S,2R)-1-C-(indol-3-yl)glycerol 3-phosphate + L-serine = D-glyceraldehyde 3-phosphate + L-tryptophan + H2O. The protein operates within amino-acid biosynthesis; L-tryptophan biosynthesis; L-tryptophan from chorismate: step 5/5. Its function is as follows. The beta subunit is responsible for the synthesis of L-tryptophan from indole and L-serine. The chain is Tryptophan synthase beta chain from Pseudomonas savastanoi pv. phaseolicola (Pseudomonas syringae pv. phaseolicola).